A 215-amino-acid polypeptide reads, in one-letter code: Cytochrome b6 (215 aa).

A helical membrane pass occupies residues isoleucine 32–phenylalanine 52. Position 35 (cysteine 35) interacts with heme c. Residues histidine 86 and histidine 100 each coordinate heme b. 3 helical membrane-spanning segments follow: residues alanine 90–phenylalanine 110, leucine 116–tyrosine 136, and leucine 186–isoleucine 206. Histidine 187 and histidine 202 together coordinate heme b.

Belongs to the cytochrome b family. PetB subfamily. In terms of assembly, the 4 large subunits of the cytochrome b6-f complex are cytochrome b6, subunit IV (17 kDa polypeptide, PetD), cytochrome f and the Rieske protein, while the 4 small subunits are PetG, PetL, PetM and PetN. The complex functions as a dimer. It depends on heme b as a cofactor. Heme c is required as a cofactor.

Its subcellular location is the plastid. It localises to the chloroplast thylakoid membrane. Functionally, component of the cytochrome b6-f complex, which mediates electron transfer between photosystem II (PSII) and photosystem I (PSI), cyclic electron flow around PSI, and state transitions. This Cucumis sativus (Cucumber) protein is Cytochrome b6.